The chain runs to 373 residues: SH3 domain-binding protein 5-like (373 aa).

The interval 1 to 36 (MEGKEGPPCEVRLPTPGAEREGPVHPELGAFGESAS) is disordered. 2 coiled-coil regions span residues 35–98 (ASDA…ESAR) and 170–258 (WQEM…KLRY). Disordered regions lie at residues 274–308 (ARRT…PADT) and 332–373 (DLTD…SVSL). Residues 332–360 (DLTDVTSLDGRETGAVESGGSRERGEDRG) are compositionally biased toward basic and acidic residues.

It belongs to the SH3BP5 family.

In terms of biological role, functions as a guanine nucleotide exchange factor (GEF) for rab11a. The sequence is that of SH3 domain-binding protein 5-like (sh3bp5l) from Xenopus laevis (African clawed frog).